We begin with the raw amino-acid sequence, 391 residues long: Formate-dependent phosphoribosylglycinamide formyltransferase (391 aa).

Residues 20-21 (EL) and Glu80 contribute to the N(1)-(5-phospho-beta-D-ribosyl)glycinamide site. Residues Arg112, Lys153, 158 to 163 (SSGKGQ), 193 to 196 (EGFI), and Glu201 each bind ATP. Residues 117–306 (RLAAETLGLP…EFALHVRAIL (190 aa)) enclose the ATP-grasp domain. 2 residues coordinate Mg(2+): Glu265 and Glu277. N(1)-(5-phospho-beta-D-ribosyl)glycinamide contacts are provided by residues Asp284, Lys354, and 361–362 (RR).

It belongs to the PurK/PurT family. Homodimer.

It carries out the reaction N(1)-(5-phospho-beta-D-ribosyl)glycinamide + formate + ATP = N(2)-formyl-N(1)-(5-phospho-beta-D-ribosyl)glycinamide + ADP + phosphate + H(+). It participates in purine metabolism; IMP biosynthesis via de novo pathway; N(2)-formyl-N(1)-(5-phospho-D-ribosyl)glycinamide from N(1)-(5-phospho-D-ribosyl)glycinamide (formate route): step 1/1. Involved in the de novo purine biosynthesis. Catalyzes the transfer of formate to 5-phospho-ribosyl-glycinamide (GAR), producing 5-phospho-ribosyl-N-formylglycinamide (FGAR). Formate is provided by PurU via hydrolysis of 10-formyl-tetrahydrofolate. The sequence is that of Formate-dependent phosphoribosylglycinamide formyltransferase from Shewanella sp. (strain ANA-3).